The chain runs to 85 residues: Large ribosomal subunit protein bL27 (85 aa).

The protein belongs to the bacterial ribosomal protein bL27 family.

This chain is Large ribosomal subunit protein bL27, found in Pseudomonas fluorescens (strain ATCC BAA-477 / NRRL B-23932 / Pf-5).